A 65-amino-acid polypeptide reads, in one-letter code: Large ribosomal subunit protein bL35 (65 aa).

This sequence belongs to the bacterial ribosomal protein bL35 family.

This is Large ribosomal subunit protein bL35 from Thermotoga petrophila (strain ATCC BAA-488 / DSM 13995 / JCM 10881 / RKU-1).